Reading from the N-terminus, the 454-residue chain is Phosphoglucosamine mutase (454 aa).

Residue Ser101 is the Phosphoserine intermediate of the active site. Mg(2+) contacts are provided by Ser101, Asp243, Asp245, and Asp247. Ser101 bears the Phosphoserine mark.

It belongs to the phosphohexose mutase family. Requires Mg(2+) as cofactor. In terms of processing, activated by phosphorylation.

It catalyses the reaction alpha-D-glucosamine 1-phosphate = D-glucosamine 6-phosphate. Functionally, catalyzes the conversion of glucosamine-6-phosphate to glucosamine-1-phosphate. This chain is Phosphoglucosamine mutase, found in Citrifermentans bemidjiense (strain ATCC BAA-1014 / DSM 16622 / JCM 12645 / Bem) (Geobacter bemidjiensis).